The following is a 766-amino-acid chain: MKEKSKNAARTRREKENSEFYELAKLLPLPSAITSQLDKASIIRLTTSYLKMRVVFPEGLGEAWGHSSRTSPLDNVGRELGSHLLQTLDGFIFVVAPDGKIMYISETASVHLGLSQVELTGNSIYEYIHPADHDEMTAVLTAHQPYHSHFVQEYEIERSFFLRMKCVLAKRNAGLTCGGYKVIHCSGYLKIRQYSLDMSPFDGCYQNVGLVAVGHSLPPSAVTEIKLHSNMFMFRASLDMKLIFLDSRVAELTGYEPQDLIEKTLYHHVHGCDTFHLRCAHHLLLVKGQVTTKYYRFLAKHGGWVWVQSYATIVHNSRSSRPHCIVSVNYVLTDTEYKGLQLSLDQISASKPAFSYTSSSTPTMTDNRKGAKSRLSSSKSKSRTSPYPQYSGFHTERSESDHDSQWGGSPLTDTASPQLLDPADRPGSQHDASCAYRQFSDRSSLCYGFALDHSRLVEERHFHTQACEGGRCEAGRYFLGTPQAGREPWWGSRAALPLTKASPESREAYENSMPHIASVHRIHGRGHWDEDSVVSSPDPGSASESGDRYRTEQYQSSPHEPSKIETLIRATQQMIKEEENRLQLRKAPSDQLASINGAGKKHSLCFANYQQPPPTGEICHGSALANTSPCDHIQQREGKMLSPRENDYDNSPTALSRISSPNSDRISKSSLILAKDYLHSDISPHQTAGDHPTVSPNCFGSHRQYLDKHAYTLTGYALEHLYDSETIRNYSLGCNGSHFDVTSHLRMQPDPAQGHKGTSVIITNGS.

The 53-residue stretch at 1-53 (MKEKSKNAARTRREKENSEFYELAKLLPLPSAITSQLDKASIIRLTTSYLKMR) folds into the bHLH domain. PAS domains lie at 77–147 (GREL…QPYH) and 218–288 (PPSA…LVKG). Residues 292–335 (TKYYRFLAKHGGWVWVQSYATIVHNSRSSRPHCIVSVNYVLTDT) enclose the PAC domain. The region spanning 336–766 (EYKGLQLSLD…GTSVIITNGS (431 aa)) is the Single-minded C-terminal domain. The segment covering 353–365 (AFSYTSSSTPTMT) has biased composition (polar residues). Disordered regions lie at residues 353-431 (AFSY…SQHD), 528-563 (WDED…EPSK), and 642-662 (SPRE…SSPN). Positions 368 to 387 (RKGAKSRLSSSKSKSRTSPY) match the Nuclear localization signal motif. The segment covering 373–385 (SRLSSSKSKSRTS) has biased composition (low complexity). Residues 394-404 (HTERSESDHDS) are compositionally biased toward basic and acidic residues. Residues 649-662 (DNSPTALSRISSPN) show a composition bias toward polar residues.

Efficient DNA binding requires dimerization with another bHLH protein. Heterodimer; forms a heterodimer with ARNT, ARNT2.

The protein localises to the nucleus. Its function is as follows. Transcriptional factor that may have pleiotropic effects during embryogenesis and in the adult. The chain is Single-minded homolog 1 (SIM1) from Pan troglodytes (Chimpanzee).